Consider the following 248-residue polypeptide: B-box zinc finger protein 24 (248 aa).

8 residues coordinate Zn(2+): C5, C8, C28, H33, C57, C60, C80, and H85. The B box-type 1; atypical zinc-finger motif lies at 5–47; it reads CDVCEKAPATVICCADEAALCPQCDIEIHAANKLASKHQRLHL. A B box-type 2; atypical zinc finger spans residues 57 to 99; it reads CDICQEKAAFIFCVEDRALLCRDCDESIHVANSRSANHQRFLA. The tract at residues 115–148 is disordered; the sequence is IEKNQPEPSNNQQKANQIPAKSTSQQQQQPSSAT. A compositionally biased stretch (polar residues) spans 120–130; that stretch reads PEPSNNQQKAN. Low complexity predominate over residues 131–148; the sequence is QIPAKSTSQQQQQPSSAT. The Nuclear localization signal motif lies at 226–229; sequence KKPR. The interaction with COP1 stretch occupies residues 236–248; the sequence is DDDEEHFIVPDLG.

As to quaternary structure, interacts with COP1 WD40 domain. Interacts with HY5 and HYH. Interacts with RCD1 and TRP4. COP1-mediated ubiquitination and subsequent proteasomal degradation of BBX24/STO occurs in the dark. As to expression, high expression in leaves and lower in roots and flowers.

It is found in the nucleus. Functionally, acts as a negative regulator of seedling photomorphogenesis and light-regulated inhibition of hypocotyl elongation. BBX24/STO and BBX25/STH function as transcriptional corepressors of HY5 activity, leading to the down-regulation of BBX22 expression. BBX24/STO acts additively with BBX25/STH during de-etiolation and the hypocotyl shade avoidance response. Functions as a negative regulator of photomorphogenic UV-B responses by interacting with both COP1 and HY5. May act as a transcription factor in the salt-stress response. The chain is B-box zinc finger protein 24 from Arabidopsis thaliana (Mouse-ear cress).